A 335-amino-acid polypeptide reads, in one-letter code: Beta-hexosaminidase (335 aa).

Substrate-binding positions include Asp-60, Arg-68, Arg-133, and 163 to 164 (KH). His-176 acts as the Proton donor/acceptor in catalysis. Catalysis depends on Asp-247, which acts as the Nucleophile.

This sequence belongs to the glycosyl hydrolase 3 family. NagZ subfamily.

It localises to the cytoplasm. It carries out the reaction Hydrolysis of terminal non-reducing N-acetyl-D-hexosamine residues in N-acetyl-beta-D-hexosaminides.. It participates in cell wall biogenesis; peptidoglycan recycling. Its function is as follows. Plays a role in peptidoglycan recycling by cleaving the terminal beta-1,4-linked N-acetylglucosamine (GlcNAc) from peptide-linked peptidoglycan fragments, giving rise to free GlcNAc, anhydro-N-acetylmuramic acid and anhydro-N-acetylmuramic acid-linked peptides. The protein is Beta-hexosaminidase of Stenotrophomonas maltophilia (strain R551-3).